Reading from the N-terminus, the 340-residue chain is Erythroferrone (340 aa).

The signal sequence occupies residues 1-24 (MASTRRPVGARTLLACASLLAAMG). Disordered stretches follow at residues 30-63 (SAEPVGTHARPQPPGAELPAPPANSPPEPTIAHA), 79-112 (SDKGINSKRRSKARRLKLGLPGPPGPPGPQGPPG), and 141-161 (HCTRDLTTPASGSPSRVPAAQ). The span at 40–58 (PQPPGAELPAPPANSPPEP) shows a compositional bias: pro residues. Positions 84 to 95 (NSKRRSKARRLK) are enriched in basic residues. Pro99, Pro101, Pro102, Pro104, Pro105, and Pro107 each carry hydroxyproline. Residues 99–112 (PGPPGPPGPQGPPG) are compositionally biased toward pro residues. Residues 145–154 (DLTTPASGSP) show a composition bias toward polar residues. The 156-residue stretch at 185–340 (APRVEAAFHC…SHFSAILLGL (156 aa)) folds into the C1q domain. N-linked (GlcNAc...) asparagine glycans are attached at residues Asn229, Asn281, Asn292, and Asn319.

It belongs to the adipolin/erythroferrone family. In terms of assembly, homodimer; disulfide-linked. Forms trimer, hexamers and higher molecular weight oligomers. May form heteromeric complexes with C1QTNF2 and C1QTNF12 and, to a lesser extent, with C1QTNF5 and C1QTNF10. Interacts with BMP5 and BMP7; the interaction inhibits BMP-induced transcription of HAMP. Interacts with BMP6; the interaction inhibits BMP-induced transcription of HAMP. Interacts with BMP2. Interacts with heterodimers composed of BMP2 and BMP6 in vitro, the interaction inhibits the heterodimer binding to its receptor BMPR1A /ALK3 and thereby suppresses expression of HAMP. In terms of processing, N-glycosylated; required for secretion of the mature protein. In terms of tissue distribution, expressed in the soleus muscle in the leg (at protein level). Found in blood (at protein level). Weakly expressed in the heart (at protein level). Predominantly expressed in skeletal muscle and, at much lower levels, in other tissues, including lung, eye, smooth muscle, brain and kidney. Within skeletal muscles, higher expression levels in soleus as compared with plantaris. Expressed in osteoblasts, mature osteoclasts and erythroblasts. When fasting, females tend to have higher circulating levels than males. Obese mice tend to have lower expression and circulating levels as compared to lean animals. Following EPO treatment, only expressed in bone marrow and spleen.

The protein localises to the secreted. Its function is as follows. Iron-regulatory hormone that acts as an erythroid regulator after hemorrhage: produced by erythroblasts following blood loss and mediates suppression of hepcidin (HAMP) expression in the liver, thereby promoting increased iron absorption and mobilization from stores. Promotes lipid uptake into adipocytes and hepatocytes via transcriptional up-regulation of genes involved in fatty acid uptake. Inhibits apoptosis and inflammatory response in cardiomyocytes via promotion of sphingosine-1-phosphate (S1P) and cAMP-dependent activation of AKT signaling. Inhibits autophagy induced by nutrient deficiency in hepatocytes via promoting the phosphorylation of IRS1, AKT, and MTOR, and thereby subsequent activation of the AKT-MTOR signaling pathway. Negatively regulates the differentiation of osteoblasts, potentially via sequestering BMP2, and thereby inhibits the activation of SMAD signaling. The reduction in BMP2 signaling in osteoblasts also results in an increase in expression of the osteoclastogenesis-promoting factors TNFSF11/RANKL and SOST, thereby indirectly promotes bone resorption. In Mus musculus (Mouse), this protein is Erythroferrone.